The following is a 274-amino-acid chain: Thiamine kinase (274 aa).

Belongs to the thiamine kinase family.

The catalysed reaction is thiamine + ATP = thiamine phosphate + ADP + H(+). It participates in cofactor biosynthesis; thiamine diphosphate biosynthesis; thiamine phosphate from thiamine: step 1/1. Functionally, catalyzes the ATP-dependent phosphorylation of thiamine to thiamine phosphate. Is involved in thiamine salvage. The chain is Thiamine kinase from Escherichia coli O139:H28 (strain E24377A / ETEC).